The primary structure comprises 131 residues: MTVKLLFQLFQLYFLLIYSSLEVEFKCTEDRKPISVNLKLHNPTAVTVSYKVRCTSADIFRVQPPLGFVKPSETVSIVIWYQNQDKKDAISKNHYFAFYHTNSDGRTARELWANSKVEGVRRLPASFLSTK.

The region spanning 14 to 130 is the MSP domain; it reads FLLIYSSLEV…RRLPASFLST (117 aa).

This is an uncharacterized protein from Caenorhabditis elegans.